Consider the following 148-residue polypeptide: Arginine repressor (148 aa).

The protein belongs to the ArgR family.

The protein resides in the cytoplasm. The protein operates within amino-acid biosynthesis; L-arginine biosynthesis [regulation]. Its function is as follows. Regulates arginine biosynthesis genes. This Chloroherpeton thalassium (strain ATCC 35110 / GB-78) protein is Arginine repressor.